A 492-amino-acid polypeptide reads, in one-letter code: MYIVQIASECAPVIKAGGLGDVVYGLSRELEIRGNCVELILPKYDCMRYDHIWGLHEAYLNLWVPWFGAAIHCTVYCGWVHGRVCFFIEPHSEDNFFNRGCYYGCDDDDMRFAFFSKAALEFLHQSNKRPDIIHCHDWQTGLVPVMLYEIYKYHGMDTQRVCYTIHNFKHQGIGGVKTLWATGLNREAYYFQNDKLQDDFNPFALNYMKGGIVYSNAVTTVSPNHALEAQYTDVGCGLGHTLYQHKDKFSGILNGIDYDFWNPEIDRYIPYNYNQEDFEQKLYNKKALRERLLLQAADKPIIAYIGRLDNQKGVHLVHHAIYHSLNKGAQFVLLGSATEAGINAHFRHEKQFLNNNPDVHLELGFNEELSHLIYAGADMIVVPSNYEPCGLTQMIGLKYGTVPIVRGVGGLVNTVFDRDYDQNLPPEKRNGYVFYQSDNQALESAMNRAIDLWYQSPEKFQQLAIQGMKYDYSWNNPGKEYLDIYEWIKYKW.

Lysine 15 lines the ADP-alpha-D-glucose pocket.

This sequence belongs to the glycosyltransferase 1 family. Bacterial/plant glycogen synthase subfamily.

It carries out the reaction [(1-&gt;4)-alpha-D-glucosyl](n) + ADP-alpha-D-glucose = [(1-&gt;4)-alpha-D-glucosyl](n+1) + ADP + H(+). The protein operates within glycan biosynthesis; glycogen biosynthesis. Functionally, synthesizes alpha-1,4-glucan chains using ADP-glucose. This is Glycogen synthase 1 from Trichormus variabilis (strain ATCC 29413 / PCC 7937) (Anabaena variabilis).